Here is a 423-residue protein sequence, read N- to C-terminus: CDP-diacylglycerol--serine O-phosphatidyltransferase 2 (423 aa).

Transmembrane regions (helical) follow at residues 38 to 58 (PHTI…SGAL), 77 to 97 (WAMI…TILI), 103 to 123 (VWRL…FLLF), 195 to 215 (LLLW…RHML), 222 to 242 (WWDS…WAGM), 294 to 314 (FVQV…TFFL), 319 to 339 (WIPP…LIAI), 359 to 379 (GAFC…CMKF), and 390 to 410 (TWLI…LLAW).

Belongs to the CDP-alcohol phosphatidyltransferase class-I family.

Its subcellular location is the endoplasmic reticulum membrane. It carries out the reaction a CDP-1,2-diacyl-sn-glycerol + L-serine = a 1,2-diacyl-sn-glycero-3-phospho-L-serine + CMP + H(+). Its pathway is phospholipid metabolism; phosphatidylethanolamine biosynthesis; phosphatidylethanolamine from CDP-diacylglycerol: step 1/2. Its function is as follows. Catalyzes a base-exchange reaction in which the polar head group of phosphatidylethanolamine (PE) or phosphatidylcholine (PC) is replaced by L-serine. This is CDP-diacylglycerol--serine O-phosphatidyltransferase 2 (PSS2) from Oryza sativa subsp. japonica (Rice).